The sequence spans 1732 residues: Serine/threonine-protein kinase MRCK alpha (1732 aa).

The region spanning 77–343 is the Protein kinase domain; the sequence is FEILKVIGRG…IEDFKKHPFF (267 aa). ATP is bound by residues 83 to 91 and Lys106; that span reads IGRGAFGEV. The Proton acceptor role is filled by Asp201. Phosphoserine; by autocatalysis is present on residues Ser222 and Ser234. At Thr240 the chain carries Phosphothreonine; by autocatalysis. The AGC-kinase C-terminal domain occupies 344–414; it reads SGIDWDNIRN…TSSCVLSDRS (71 aa). Coiled coils occupy residues 437-670, 713-820, and 880-943; these read NNLA…KQKQ, SEIK…WEAQ, and LELQ…SEKG. Positions 973-1002 are disordered; the sequence is CTPAGKGRRIADSAPLPVHTPTLRKKGCPA. The segment at 1012 to 1062 adopts a Phorbol-ester/DAG-type zinc-finger fold; it reads THQFFVKSFTAPTKCHQCTSLMVGLIRQGCSCEVCGFSCHITCVNKAPTTC. The 120-residue stretch at 1082 to 1201 folds into the PH domain; it reads GTAYEGHVRI…WVGVLSELHK (120 aa). Position 1127 is a phosphoserine (Ser1127). A CNH domain is found at 1227 to 1499; it reads IKTTQAAAII…RPLNTEGSLN (273 aa). Ser1545 carries the phosphoserine modification. Residues 1571 to 1584 enclose the CRIB domain; sequence ISNPTNFNHIAHMG. The tract at residues 1592–1732 is disordered; the sequence is LKDLPMNPRP…ESTDRGSWDP (141 aa). Polar residues predominate over residues 1604 to 1619; the sequence is SRTVFSGSVSIPSITK. Residues Ser1611, Ser1613, Ser1629, Ser1651, Ser1664, Ser1669, Ser1693, Ser1719, and Ser1721 each carry the phosphoserine modification. Positions 1625–1640 are enriched in low complexity; it reads GRSMSASSGLSARSSA. The span at 1665–1674 shows a compositional bias: low complexity; sequence PSEGSLSSGG.

The protein belongs to the protein kinase superfamily. AGC Ser/Thr protein kinase family. DMPK subfamily. Homodimer and homotetramer via the coiled coil regions. Interacts tightly with GTP-bound but not GDP-bound CDC42. Forms a tripartite complex with MYO18A and LURAP1 with the latter acting as an adapter connecting CDC42BPA and MYO18A. LURAP1 binding results in activation of CDC42BPA by abolition of its negative autoregulation. Interacts with LURAP1. Interacts (via AGC-kinase C-terminal domain) with FAM89B/LRAP25 (via LRR repeat). Forms a tripartite complex with FAM89B/LRAP25 and LIMK1. It depends on Mg(2+) as a cofactor. In terms of processing, proteolytically cleaved by caspases upon apoptosis induction. The cleavage at Asp-478 by CASP3 increases its kinase activity (in vitro). Highly expressed in the brain and lung and present in lower levels in all other tissues tested.

The protein localises to the cytoplasm. It is found in the cell projection. The protein resides in the lamellipodium. The catalysed reaction is L-seryl-[protein] + ATP = O-phospho-L-seryl-[protein] + ADP + H(+). The enzyme catalyses L-threonyl-[protein] + ATP = O-phospho-L-threonyl-[protein] + ADP + H(+). Its activity is regulated as follows. Maintained in an inactive, closed conformation by an interaction between the kinase domain and the negative autoregulatory C-terminal coiled-coil region. Agonist binding to the phorbol ester binding site disrupts this, releasing the kinase domain to allow N-terminus-mediated dimerization and kinase activation by transautophosphorylation. Inhibited by chelerythrine chloride. Serine/threonine-protein kinase which is an important downstream effector of CDC42 and plays a role in the regulation of cytoskeleton reorganization and cell migration. Regulates actin cytoskeletal reorganization via phosphorylation of PPP1R12A and MYL9/MLC2. In concert with MYO18A and LURAP1, is involved in modulating lamellar actomyosin retrograde flow that is crucial to cell protrusion and migration. Phosphorylates: PPP1R12C, LIMK1 and LIMK2. May play a role in TFRC-mediated iron uptake. In concert with FAM89B/LRAP25 mediates the targeting of LIMK1 to the lamellipodium resulting in its activation and subsequent phosphorylation of CFL1 which is important for lamellipodial F-actin regulation. Triggers the formation of an extrusion apical actin ring required for epithelial extrusion of apoptotic cells. In Rattus norvegicus (Rat), this protein is Serine/threonine-protein kinase MRCK alpha.